A 784-amino-acid chain; its full sequence is DNA ligase (784 aa).

Residues 31–35 (DAEYD), 80–81 (SL), and glutamate 120 each bind NAD(+). The N6-AMP-lysine intermediate role is filled by lysine 122. Positions 143, 180, 296, and 320 each coordinate NAD(+). Residues cysteine 414, cysteine 417, cysteine 444, and cysteine 450 each coordinate Zn(2+). A BRCT domain is found at 701–784 (AEGLPLAGQT…AFMAEQGITL (84 aa)).

It belongs to the NAD-dependent DNA ligase family. LigA subfamily. It depends on Mg(2+) as a cofactor. The cofactor is Mn(2+).

It catalyses the reaction NAD(+) + (deoxyribonucleotide)n-3'-hydroxyl + 5'-phospho-(deoxyribonucleotide)m = (deoxyribonucleotide)n+m + AMP + beta-nicotinamide D-nucleotide.. Its function is as follows. DNA ligase that catalyzes the formation of phosphodiester linkages between 5'-phosphoryl and 3'-hydroxyl groups in double-stranded DNA using NAD as a coenzyme and as the energy source for the reaction. It is essential for DNA replication and repair of damaged DNA. In Pseudomonas entomophila (strain L48), this protein is DNA ligase.